A 342-amino-acid chain; its full sequence is Anthranilate phosphoribosyltransferase (342 aa).

5-phospho-alpha-D-ribose 1-diphosphate contacts are provided by residues Gly-80, Gly-83–Asp-84, Thr-88, Asn-90–Thr-93, Lys-108–Ser-116, and Ser-120. Gly-80 lines the anthranilate pocket. Ser-92 is a binding site for Mg(2+). Asn-111 contacts anthranilate. An anthranilate-binding site is contributed by Arg-166. The Mg(2+) site is built by Asp-225 and Glu-226.

This sequence belongs to the anthranilate phosphoribosyltransferase family. As to quaternary structure, homodimer. Mg(2+) is required as a cofactor.

The enzyme catalyses N-(5-phospho-beta-D-ribosyl)anthranilate + diphosphate = 5-phospho-alpha-D-ribose 1-diphosphate + anthranilate. Its pathway is amino-acid biosynthesis; L-tryptophan biosynthesis; L-tryptophan from chorismate: step 2/5. Catalyzes the transfer of the phosphoribosyl group of 5-phosphorylribose-1-pyrophosphate (PRPP) to anthranilate to yield N-(5'-phosphoribosyl)-anthranilate (PRA). The polypeptide is Anthranilate phosphoribosyltransferase (Halalkalibacterium halodurans (strain ATCC BAA-125 / DSM 18197 / FERM 7344 / JCM 9153 / C-125) (Bacillus halodurans)).